The primary structure comprises 101 residues: Small ribosomal subunit protein uS14 (101 aa).

Belongs to the universal ribosomal protein uS14 family. Part of the 30S ribosomal subunit. Contacts proteins S3 and S10.

Its function is as follows. Binds 16S rRNA, required for the assembly of 30S particles and may also be responsible for determining the conformation of the 16S rRNA at the A site. This chain is Small ribosomal subunit protein uS14, found in Polynucleobacter necessarius subsp. necessarius (strain STIR1).